Reading from the N-terminus, the 492-residue chain is V-type proton ATPase subunit B 1 (492 aa).

The protein belongs to the ATPase alpha/beta chains family. In terms of assembly, V-ATPase is a heteromultimeric enzyme composed of a peripheral catalytic V1 complex (main components: subunits A, B, C, D, E, and F) attached to an integral membrane V0 proton pore complex (main component: the proteolipid protein).

In terms of biological role, non-catalytic subunit of the peripheral V1 complex of vacuolar ATPase. V-ATPase is responsible for acidifying a variety of intracellular compartments in eukaryotic cells. This is V-type proton ATPase subunit B 1 from Acetabularia acetabulum (Mermaid's wine glass).